The following is a 106-amino-acid chain: UPF0642 protein YBL028C (106 aa).

Residues 1–12 (MAKSLRASSHLN) are compositionally biased toward polar residues. 2 disordered regions span residues 1–21 (MAKSLRASSHLNAKSVKRRGV) and 52–106 (KEEQ…FTRF). Basic and acidic residues predominate over residues 62 to 72 (DEKKSNEEAPR). Positions 83-106 (GRHHTYKKAKLMKQSKKKTSFTRF) are enriched in basic residues.

Belongs to the UPF0642 family.

This Saccharomyces cerevisiae (strain ATCC 204508 / S288c) (Baker's yeast) protein is UPF0642 protein YBL028C.